A 116-amino-acid chain; its full sequence is uncharacterized protein (116 aa).

A helical transmembrane segment spans residues 89–109 (VGFVILILLYILTNPNAIELI).

It belongs to the M.jannaschii MJ0023/MJ0349/MJ1072/MJ1074/MJ1107/MJECL16 family.

Its subcellular location is the membrane. This is an uncharacterized protein from Methanocaldococcus jannaschii (strain ATCC 43067 / DSM 2661 / JAL-1 / JCM 10045 / NBRC 100440) (Methanococcus jannaschii).